The sequence spans 447 residues: Probable glycine dehydrogenase (decarboxylating) subunit 1 (447 aa).

Belongs to the GcvP family. N-terminal subunit subfamily. In terms of assembly, the glycine cleavage system is composed of four proteins: P, T, L and H. In this organism, the P 'protein' is a heterodimer of two subunits.

The enzyme catalyses N(6)-[(R)-lipoyl]-L-lysyl-[glycine-cleavage complex H protein] + glycine + H(+) = N(6)-[(R)-S(8)-aminomethyldihydrolipoyl]-L-lysyl-[glycine-cleavage complex H protein] + CO2. In terms of biological role, the glycine cleavage system catalyzes the degradation of glycine. The P protein binds the alpha-amino group of glycine through its pyridoxal phosphate cofactor; CO(2) is released and the remaining methylamine moiety is then transferred to the lipoamide cofactor of the H protein. In Bacillus cereus (strain ATCC 10987 / NRS 248), this protein is Probable glycine dehydrogenase (decarboxylating) subunit 1.